The primary structure comprises 269 residues: Chymotrypsin-like elastase family member 2A (269 aa).

Positions 1-16 (MIRTLLLSTLVAGALS) are cleaved as a signal peptide. A propeptide spans 17 to 28 (CGDPTYPPYVTR) (activation peptide). Residues 29 to 267 (VVGGEEARPN…YIDWINSVIA (239 aa)) form the Peptidase S1 domain. Cys-58 and Cys-74 are oxidised to a cystine. Active-site charge relay system residues include His-73 and Asp-121. Disulfide bonds link Cys-155/Cys-222, Cys-186/Cys-202, and Cys-212/Cys-243. Ser-216 functions as the Charge relay system in the catalytic mechanism.

Belongs to the peptidase S1 family. Elastase subfamily. As to quaternary structure, interacts with CPA1. Interacts with SERPINA1. In terms of tissue distribution, expressed in pancreas. Not detected in keratinocytes. Detected in exocrine secretions of the pancreas (at protein level). Also expressed in a small fraction of cells in pancreatic islets, adrenal cortex, intestinal glands and colonic lymphoid follicles (at protein level). Detected in plasma.

It is found in the secreted. The enzyme catalyses Preferential cleavage: Leu-|-Xaa, Met-|-Xaa and Phe-|-Xaa. Hydrolyzes elastin.. Its function is as follows. Elastase that enhances insulin signaling and might have a physiologic role in cellular glucose metabolism. Circulates in plasma and reduces platelet hyperactivation, triggers both insulin secretion and degradation, and increases insulin sensitivity. The sequence is that of Chymotrypsin-like elastase family member 2A from Homo sapiens (Human).